The following is a 162-amino-acid chain: MHTRALYPGTFDPITNGHADLIERASQLFSHVIVAIASNPSKKPLFTLEERVEMIKKVTADLPNVEVVGFTGLLADFADEQNATILIRGLRAVSDFEYEFQLANMNRRLNPKLESVFLTPAEENSFISSTLVKEVALHRGAVSGFCHPVVEQALRDRLGKKN.

Position 10 (Thr-10) interacts with substrate. Residues 10–11 and His-18 each bind ATP; that span reads TF. Substrate contacts are provided by Lys-42, Leu-74, and Arg-88. ATP-binding positions include 89 to 91, Glu-99, and 124 to 130; these read GLR and NSFISST.

This sequence belongs to the bacterial CoaD family. In terms of assembly, homohexamer. It depends on Mg(2+) as a cofactor.

Its subcellular location is the cytoplasm. It carries out the reaction (R)-4'-phosphopantetheine + ATP + H(+) = 3'-dephospho-CoA + diphosphate. The protein operates within cofactor biosynthesis; coenzyme A biosynthesis; CoA from (R)-pantothenate: step 4/5. Reversibly transfers an adenylyl group from ATP to 4'-phosphopantetheine, yielding dephospho-CoA (dPCoA) and pyrophosphate. This Alteromonas mediterranea (strain DSM 17117 / CIP 110805 / LMG 28347 / Deep ecotype) protein is Phosphopantetheine adenylyltransferase.